Reading from the N-terminus, the 436-residue chain is mRNA cap guanine-N(7) methyltransferase (436 aa).

The interval 1–50 (MSTKPEKPIWMSQEDYDRQYGSITGDESSTVSKKDSKVTANAPGDGNGSL) is disordered. Residues 141 to 424 (SPIIKLRNFN…FYTMFAFRKV (284 aa)) form the mRNA cap 0 methyltransferase domain. MRNA is bound at residue 150-151 (NN). S-adenosyl-L-methionine contacts are provided by lysine 154, glycine 172, aspartate 194, aspartate 223, glutamine 249, and tyrosine 254.

The protein belongs to the class I-like SAM-binding methyltransferase superfamily. mRNA cap 0 methyltransferase family.

The protein resides in the nucleus. It catalyses the reaction a 5'-end (5'-triphosphoguanosine)-ribonucleoside in mRNA + S-adenosyl-L-methionine = a 5'-end (N(7)-methyl 5'-triphosphoguanosine)-ribonucleoside in mRNA + S-adenosyl-L-homocysteine. Its function is as follows. Responsible for methylating the 5'-cap structure of mRNAs. The polypeptide is mRNA cap guanine-N(7) methyltransferase (ABD1) (Saccharomyces cerevisiae (strain ATCC 204508 / S288c) (Baker's yeast)).